The sequence spans 523 residues: MPELGSLLLSTQAVAAPGELLNLALHAGTVGPEAAVLVAMIATLLVDLAGEKVSVRWVPPICYAGLGSALVLLALQWNAPLEPSFLGAFLSDHLAIAFRAVVALSTLLSLLISWRYAEQSGTPVGEYAAILLAATLGGMLLCGATDLVSVFVSLETLSVASYLLSGYMKRDARSSEAALKYLLVGSAAAAVFLYGASLLYGLSGSTSLEVIGNALVTSPTPLAALALVFVLATVAFKIAAVPFHQWTPDVYEGSPTPVVAFLSVGSKAAGFALALRLLVGCFGSFDTQWKLLFTVLAILSMTLGNVVALAQTSMKRMLAYSSIGQAGFVMIGLVCGTEDGFAAMVLYMATYLFMNLGAFACIILFSIRTGSDRISDYAGLYQKDPLITLGLSLCLLSLGGIPPMLGFFGKIYLFFAGWADHQYVLVVVGLVTSVISIYYYIGVIKMMVVKEPQEASEVVKAYPPINWSTMGLPPLRVALVLCVLVTAVGGILSNPLFEWASSTVAGTPLLQQAIATSSGASLG.

The next 13 helical transmembrane spans lie at 30-50 (VGPE…DLAG), 57-77 (WVPP…ALQW), 94-114 (LAIA…LISW), 128-148 (AAIL…TDLV), 182-202 (LLVG…LYGL), 223-243 (AALA…AVPF), 255-275 (PTPV…ALAL), 291-311 (LLFT…ALAQ), 317-337 (MLAY…VCGT), 345-365 (VLYM…IILF), 389-409 (LGLS…GFFG), 424-444 (VLVV…IGVI), and 477-497 (VALV…NPLF).

The protein belongs to the complex I subunit 2 family. NDH-1 can be composed of about 15 different subunits; different subcomplexes with different compositions have been identified which probably have different functions.

It is found in the cellular thylakoid membrane. It catalyses the reaction a plastoquinone + NADH + (n+1) H(+)(in) = a plastoquinol + NAD(+) + n H(+)(out). It carries out the reaction a plastoquinone + NADPH + (n+1) H(+)(in) = a plastoquinol + NADP(+) + n H(+)(out). Functionally, NDH-1 shuttles electrons from an unknown electron donor, via FMN and iron-sulfur (Fe-S) centers, to quinones in the respiratory and/or the photosynthetic chain. The immediate electron acceptor for the enzyme in this species is believed to be plastoquinone. Couples the redox reaction to proton translocation, and thus conserves the redox energy in a proton gradient. Cyanobacterial NDH-1 also plays a role in inorganic carbon-concentration. This is NAD(P)H-quinone oxidoreductase subunit 2 from Synechococcus sp. (strain CC9311).